We begin with the raw amino-acid sequence, 413 residues long: tRNA (guanine-N(7)-)-methyltransferase non-catalytic subunit WDR4 (413 aa).

An N-acetylalanine modification is found at Ala2. WD repeat units follow at residues 61–100 (TGSDSILASTFSKSGRYFALTDDSKRLILFRTKPWQCLSV), 102–141 (MVVRRCTALTFTASEDRVLVADKSGDVYSFSVLEPDGCGR), 145–185 (GHLS…IESF), 188–228 (GHTE…QLQC), and 289–329 (TFPH…WQAA). The interval 380-413 (RLQQQLKKKRQRSPFPGSPEQTKKACPGQSALSC) is disordered. Residues Ser392 and Ser412 each carry the phosphoserine modification.

It belongs to the WD repeat TRM82 family. In terms of assembly, non-catalytic component of the METTL1-WDR4 complex, composed of METTL1 and WDR4. Interacts with FEN1; the interaction is direct.

It is found in the nucleus. The protein localises to the chromosome. The protein operates within tRNA modification; N(7)-methylguanine-tRNA biosynthesis. Its function is as follows. Non-catalytic component of the METTL1-WDR4 methyltransferase complex required for the formation of N(7)-methylguanine in a subset of RNA species, such as tRNAs, mRNAs and microRNAs (miRNAs). In the METTL1-WDR4 methyltransferase complex, WDR4 acts as a scaffold for tRNA-binding. Required for the formation of N(7)-methylguanine at position 46 (m7G46) in a large subset of tRNAs that contain the 5'-RAGGU-3' motif within the variable loop. M7G46 interacts with C13-G22 in the D-loop to stabilize tRNA tertiary structure and protect tRNAs from decay. Also required for the formation of N(7)-methylguanine at internal sites in a subset of mRNAs. Also required for methylation of a specific subset of miRNAs, such as let-7. Acts as a regulator of embryonic stem cell self-renewal and differentiation. Independently of METTL1, also plays a role in genome stability: localizes at the DNA replication site and regulates endonucleolytic activities of FEN1. This Mus musculus (Mouse) protein is tRNA (guanine-N(7)-)-methyltransferase non-catalytic subunit WDR4.